A 245-amino-acid polypeptide reads, in one-letter code: tRNA pseudouridine synthase A (245 aa).

The active-site Nucleophile is aspartate 52. Residue tyrosine 111 coordinates substrate.

This sequence belongs to the tRNA pseudouridine synthase TruA family. In terms of assembly, homodimer.

It carries out the reaction uridine(38/39/40) in tRNA = pseudouridine(38/39/40) in tRNA. Formation of pseudouridine at positions 38, 39 and 40 in the anticodon stem and loop of transfer RNAs. In Thermotoga sp. (strain RQ2), this protein is tRNA pseudouridine synthase A.